The chain runs to 345 residues: Heat-inducible transcription repressor HrcA (345 aa).

Belongs to the HrcA family.

Negative regulator of class I heat shock genes (grpE-dnaK-dnaJ and groELS operons). Prevents heat-shock induction of these operons. The protein is Heat-inducible transcription repressor HrcA of Lachnoclostridium phytofermentans (strain ATCC 700394 / DSM 18823 / ISDg) (Clostridium phytofermentans).